Reading from the N-terminus, the 113-residue chain is Large ribosomal subunit protein bL19 (113 aa).

The protein belongs to the bacterial ribosomal protein bL19 family.

Its function is as follows. This protein is located at the 30S-50S ribosomal subunit interface and may play a role in the structure and function of the aminoacyl-tRNA binding site. This Mycobacterium marinum (strain ATCC BAA-535 / M) protein is Large ribosomal subunit protein bL19.